Here is a 44-residue protein sequence, read N- to C-terminus: 2S seed storage albumin protein (44 aa).

Cystine bridges form between C7–C42 and C19–C31.

This sequence belongs to the 2S seed storage albumins family. As to quaternary structure, the mature protein consists of a small and a large chain linked by 2 disulfide bonds.

This is a 2S seed storage protein. Has antifungal activity. Inhibits spore germination in H.sativum (IC(50)=62.5 ug/ml) and P.betae (IC(50)=62.5 ug/ml). Inhibits growth of H.sativum, V.albo-atrum and P.infestans. The chain is 2S seed storage albumin protein from Taraxacum officinale (Common dandelion).